We begin with the raw amino-acid sequence, 642 residues long: Chaperone protein DnaK (642 aa).

At threonine 198 the chain carries Phosphothreonine; by autocatalysis. The span at 578–589 (DDKEAIESRMQK) shows a compositional bias: basic and acidic residues. Residues 578–642 (DDKEAIESRM…FEEVKDGDKK (65 aa)) form a disordered region. Residues 603–619 (AEQAAQQGGDAGAQAED) show a composition bias toward low complexity.

This sequence belongs to the heat shock protein 70 family.

Acts as a chaperone. The protein is Chaperone protein DnaK of Hahella chejuensis (strain KCTC 2396).